A 122-amino-acid chain; its full sequence is Large ribosomal subunit protein uL14 (122 aa).

Belongs to the universal ribosomal protein uL14 family. Part of the 50S ribosomal subunit. Forms a cluster with proteins L3 and L19. In the 70S ribosome, L14 and L19 interact and together make contacts with the 16S rRNA in bridges B5 and B8.

In terms of biological role, binds to 23S rRNA. Forms part of two intersubunit bridges in the 70S ribosome. This chain is Large ribosomal subunit protein uL14, found in Thermosipho africanus (strain TCF52B).